A 365-amino-acid chain; its full sequence is Isopentenyl-diphosphate delta-isomerase (365 aa).

8–9 (RK) is a substrate binding site. Residues 67 to 69 (SIT), S97, and N126 contribute to the FMN site. Residue 97 to 99 (SQR) coordinates substrate. Q160 is a substrate binding site. A Mg(2+)-binding site is contributed by E161. FMN-binding positions include K192, T222, 272–274 (GIR), and 293–294 (AL).

It belongs to the IPP isomerase type 2 family. Homooctamer. Dimer of tetramers. It depends on FMN as a cofactor. The cofactor is NADPH. Mg(2+) is required as a cofactor.

It is found in the cytoplasm. The enzyme catalyses isopentenyl diphosphate = dimethylallyl diphosphate. Functionally, involved in the biosynthesis of isoprenoids. Catalyzes the 1,3-allylic rearrangement of the homoallylic substrate isopentenyl (IPP) to its allylic isomer, dimethylallyl diphosphate (DMAPP). This is Isopentenyl-diphosphate delta-isomerase from Methanosarcina barkeri (strain Fusaro / DSM 804).